A 427-amino-acid polypeptide reads, in one-letter code: mRNA cap guanine-N(7) methyltransferase (427 aa).

The segment at Met-1–Ala-79 is disordered. Phosphoserine occurs at positions 22, 24, 29, 46, and 48. Residues His-44–Gly-57 are compositionally biased toward basic and acidic residues. Residues Ser-103–Cys-411 form the mRNA cap 0 methyltransferase domain. MRNA is bound at residue Asn-112–Asn-113. Positions 116, 143, 165, 202, 225, and 230 each coordinate S-adenosyl-L-methionine.

It belongs to the class I-like SAM-binding methyltransferase superfamily. mRNA cap 0 methyltransferase family.

It is found in the nucleus. The catalysed reaction is a 5'-end (5'-triphosphoguanosine)-ribonucleoside in mRNA + S-adenosyl-L-methionine = a 5'-end (N(7)-methyl 5'-triphosphoguanosine)-ribonucleoside in mRNA + S-adenosyl-L-homocysteine. MRNA-capping methyltransferase that methylates the N7 position of the added guanosine to the 5'-cap structure of mRNAs. Binds RNA containing 5'-terminal GpppC. In Drosophila melanogaster (Fruit fly), this protein is mRNA cap guanine-N(7) methyltransferase.